The chain runs to 261 residues: uncharacterized protein (261 aa).

2 helical membrane passes run 4–21 (RLIAIATFVVTFGILIVL) and 33–55 (FSILSILAAVLTIAAYFFTLVLF).

It localises to the cell membrane. This is an uncharacterized protein from Archaeoglobus fulgidus (strain ATCC 49558 / DSM 4304 / JCM 9628 / NBRC 100126 / VC-16).